The primary structure comprises 267 residues: Hydroxynaphthalene reductase-like protein Arp2 (267 aa).

4 residues coordinate NADP(+): isoleucine 25, asparagine 45, aspartate 71, and asparagine 98. Catalysis depends on proton donor residues serine 147 and serine 148. Residues tyrosine 162, lysine 166, valine 195, and threonine 197 each coordinate NADP(+). The Proton acceptor role is filled by tyrosine 162. Catalysis depends on lysine 166, which acts as the Lowers pKa of active site Tyr.

This sequence belongs to the short-chain dehydrogenases/reductases (SDR) family.

Hydroxynaphthalene reductase-like protein; part of the Pks2 gene cluster that mediates the formation of infectious structures (appressoria), enabling these fungi to kill insects faster. The product of the Pks2 gene cluster is different from the one of Pks1 and has still not been identified. The sequence is that of Hydroxynaphthalene reductase-like protein Arp2 from Metarhizium robertsii (strain ARSEF 23 / ATCC MYA-3075) (Metarhizium anisopliae (strain ARSEF 23)).